The following is a 255-amino-acid chain: Gene 54 protein (255 aa).

The sequence is that of Gene 54 protein (54) from Mycobacterium (Mycobacteriophage L5).